The following is a 434-amino-acid chain: Adenylosuccinate synthetase (434 aa).

GTP is bound by residues 25–31 (GDEGKGK) and 53–55 (GHT). The active-site Proton acceptor is the Asp26. Mg(2+)-binding residues include Asp26 and Gly53. Residues 26–29 (DEGK), 51–54 (NAGH), Thr142, Arg156, Asn233, Thr248, and Arg312 each bind IMP. His54 acts as the Proton donor in catalysis. Substrate is bound at residue 308-314 (VTTGRKR). Residues Arg314, 340-342 (KLD), and 422-424 (GVG) each bind GTP.

It belongs to the adenylosuccinate synthetase family. As to quaternary structure, homodimer. Mg(2+) is required as a cofactor.

It localises to the cytoplasm. It catalyses the reaction IMP + L-aspartate + GTP = N(6)-(1,2-dicarboxyethyl)-AMP + GDP + phosphate + 2 H(+). Its pathway is purine metabolism; AMP biosynthesis via de novo pathway; AMP from IMP: step 1/2. Its function is as follows. Plays an important role in the de novo pathway and in the salvage pathway of purine nucleotide biosynthesis. Catalyzes the first committed step in the biosynthesis of AMP from IMP. This is Adenylosuccinate synthetase from Schizosaccharomyces japonicus (strain yFS275 / FY16936) (Fission yeast).